Reading from the N-terminus, the 99-residue chain is uncharacterized protein (99 aa).

Residues 6–26 (LVCSIVFILFILFYDLKIGTI) traverse the membrane as a helical segment. In terms of domain architecture, LysM spans 48–95 (KTVKVKPGDTVMSIVGSAGSPDDIVKDFEALNPNVKANAIQAGTAYKF).

It is found in the secreted. The protein localises to the cell wall. The protein resides in the membrane. This is an uncharacterized protein from Bacillus subtilis (strain 168).